Consider the following 365-residue polypeptide: Flagellar P-ring protein (365 aa).

An N-terminal signal peptide occupies residues 1-21; that stretch reads MKSLRLVALFCCLLPLGMAHA.

The protein belongs to the FlgI family. As to quaternary structure, the basal body constitutes a major portion of the flagellar organelle and consists of four rings (L,P,S, and M) mounted on a central rod.

It is found in the periplasm. The protein localises to the bacterial flagellum basal body. In terms of biological role, assembles around the rod to form the L-ring and probably protects the motor/basal body from shearing forces during rotation. In Aeromonas hydrophila subsp. hydrophila (strain ATCC 7966 / DSM 30187 / BCRC 13018 / CCUG 14551 / JCM 1027 / KCTC 2358 / NCIMB 9240 / NCTC 8049), this protein is Flagellar P-ring protein.